A 929-amino-acid chain; its full sequence is Band 4.1-like protein 3 (929 aa).

Met1 carries the N-acetylmethionine modification. The disordered stretch occupies residues 1 to 72 (MTTESGSDSE…STPVKREIGD (72 aa)). An N-acetylthreonine; in Band 4.1-like protein 3, N-terminally processed modification is found at Thr2. Over residues 20 to 33 (QEAAGPQGQAGAQP) the composition is skewed to low complexity. A Phosphoserine modification is found at Ser96. The region spanning 118 to 399 (MQCKVTLLDG…EHHTFFRLLL (282 aa)) is the FERM domain. The interval 402–528 (APPKKFLTLG…PVTALRHEGK (127 aa)) is hydrophilic. A phosphoserine mark is found at Ser428, Ser451, and Ser486. The interval 490-554 (LITTVTPEKK…TESDQEEDAE (65 aa)) is disordered. Thr495 carries the phosphothreonine modification. A compositionally biased stretch (basic and acidic residues) spans 496–516 (PEKKAEEERVEEEDRRKKAEE). At Thr518 the chain carries Phosphothreonine. The span at 523-536 (LRHEGKTDSERTDT) shows a compositional bias: basic and acidic residues. Phosphoserine occurs at positions 525 and 543. Residue Thr545 is modified to Phosphothreonine. Position 547 is a phosphoserine (Ser547). The segment at 559–602 (DLDKTQDELMKHQTNISELKRTFLETSTETALTNEWEKRLSTSP) is spectrin--actin-binding. Disordered regions lie at residues 608–630 (RQED…SGEK), 665–689 (LETK…STEK), and 705–807 (VHAS…SPGG). Position 725 is a phosphothreonine (Thr725). Residues 726–737 (PTDRRHTGKGKE) are compositionally biased toward basic and acidic residues. The interval 777 to 929 (RTSEGLEQKS…TEITPEDGED (153 aa)) is C-terminal (CTD). Over residues 789–802 (ESSTVRVESTSVGS) the composition is skewed to low complexity. Phosphoserine is present on residues Ser802 and Ser804. Residue Thr923 is modified to Phosphothreonine.

In terms of assembly, interacts (via FERM domain) with CADM1. Interacts (via FERM domain) with PRMT3; the interaction is direct and inhibits the protein-arginine N-methyltransferase activity of PRMT3. Interacts with PRMT5. Interacts with PRMT6. Has the complete spectrin--actin-binding (SAB) domain and fully interacts with spectrin and actin. As to expression, detected in brain (at protein level). Highest expression in brain, lower in testis, adrenal gland, heart and kidney. Also present in muscle and epithelial cells. Isoform 1 is expressed in brain, isoform 2 is expressed in heart and isoform 3 is mostly expressed in kidney but also in heart and brain. Isoform 6 seems to be most abundant in kidney while isoform 4 and isoform 5 are predominantly expressed in heart and brain.

It is found in the cytoplasm. Its subcellular location is the cytoskeleton. The protein localises to the cell membrane. The protein resides in the cell junction. Functionally, tumor suppressor that inhibits cell proliferation and promotes apoptosis. Modulates the activity of protein arginine N-methyltransferases, including PRMT3 and PRMT5. The polypeptide is Band 4.1-like protein 3 (Mus musculus (Mouse)).